The chain runs to 88 residues: Exodeoxyribonuclease 7 small subunit (88 aa).

It belongs to the XseB family. As to quaternary structure, heterooligomer composed of large and small subunits.

It is found in the cytoplasm. The enzyme catalyses Exonucleolytic cleavage in either 5'- to 3'- or 3'- to 5'-direction to yield nucleoside 5'-phosphates.. In terms of biological role, bidirectionally degrades single-stranded DNA into large acid-insoluble oligonucleotides, which are then degraded further into small acid-soluble oligonucleotides. This Bordetella bronchiseptica (strain ATCC BAA-588 / NCTC 13252 / RB50) (Alcaligenes bronchisepticus) protein is Exodeoxyribonuclease 7 small subunit.